A 266-amino-acid chain; its full sequence is Undecaprenyl-diphosphatase (266 aa).

The next 8 membrane-spanning stretches (helical) occupy residues 4–24 (LATI…PVSS), 41–61 (GSAA…LVAY), 79–99 (AVAF…VGAV), 108–128 (LESP…ILAI), 143–163 (MPLR…IPGV), 184–204 (AEFS…YSLW), 220–240 (IGLF…VAIV), and 243–263 (FGFA…LLWL).

Belongs to the UppP family.

The protein localises to the cell inner membrane. It catalyses the reaction di-trans,octa-cis-undecaprenyl diphosphate + H2O = di-trans,octa-cis-undecaprenyl phosphate + phosphate + H(+). Functionally, catalyzes the dephosphorylation of undecaprenyl diphosphate (UPP). Confers resistance to bacitracin. The sequence is that of Undecaprenyl-diphosphatase from Sphingopyxis alaskensis (strain DSM 13593 / LMG 18877 / RB2256) (Sphingomonas alaskensis).